Reading from the N-terminus, the 529-residue chain is Tyrosinase (529 aa).

The first 18 residues, 1–18, serve as a signal peptide directing secretion; it reads MLLAVLYCLLWSFQTSAG. Topologically, residues 19 to 476 are lumenal, melanosome; it reads HFPRACVSSK…YLEQASRIWS (458 aa). N-linked (GlcNAc...) asparagine glycosylation is found at Asn86, Asn111, and Asn161. The Cu cation site is built by His180, His202, and His211. A glycan (N-linked (GlcNAc...) asparagine) is linked at Asn230. The disordered stretch occupies residues 287-313; that stretch reads SLCNGTPEGPLQRNPGNHDKSRTPRLP. N-linked (GlcNAc...) asparagine glycosylation occurs at Asn337. Cu cation contacts are provided by His363 and His367. Residue Asn371 is glycosylated (N-linked (GlcNAc...) asparagine). His390 serves as a coordination point for Cu cation. Residues 477 to 497 traverse the membrane as a helical segment; sequence WLLGAAMVGAVLTALLAGLVS. The Cytoplasmic portion of the chain corresponds to 498–529; that stretch reads LLCRHKRKQLPEEKQPLLMEKEDYHSLYQSHL.

Belongs to the tyrosinase family. In terms of assembly, forms an OPN3-dependent complex with DCT in response to blue light in melanocytes. It depends on Cu(2+) as a cofactor. Glycosylated.

The protein resides in the melanosome membrane. Its subcellular location is the melanosome. It catalyses the reaction 2 L-dopa + O2 = 2 L-dopaquinone + 2 H2O. The catalysed reaction is L-tyrosine + O2 = L-dopaquinone + H2O. It carries out the reaction 2 5,6-dihydroxyindole-2-carboxylate + O2 = 2 indole-5,6-quinone-2-carboxylate + 2 H2O. Its function is as follows. This is a copper-containing oxidase that functions in the formation of pigments such as melanins and other polyphenolic compounds. Catalyzes the initial and rate limiting step in the cascade of reactions leading to melanin production from tyrosine. In addition to hydroxylating tyrosine to DOPA (3,4-dihydroxyphenylalanine), also catalyzes the oxidation of DOPA to DOPA-quinone, and possibly the oxidation of DHI (5,6-dihydroxyindole) to indole-5,6 quinone. This Gorilla gorilla gorilla (Western lowland gorilla) protein is Tyrosinase (TYR).